The following is a 169-amino-acid chain: MPLLDSFTVDHTRMNAPAVRVAKSMATPKGDTITVFDLRFCVPNKEILSERGIHTLEHLFAGFMRDHLNSDSVEIIDISPMGCRTGFYMSLIGTPSESVVADAWLAAMQDVLNVVAQADIPELNEYQCGTYEMHSLEQAQEIARNIIAAGINVNRNDDLSLSDEILKGL.

Positions 54, 58, and 128 each coordinate Fe cation.

Belongs to the LuxS family. Homodimer. It depends on Fe cation as a cofactor.

The catalysed reaction is S-(5-deoxy-D-ribos-5-yl)-L-homocysteine = (S)-4,5-dihydroxypentane-2,3-dione + L-homocysteine. Involved in the synthesis of autoinducer 2 (AI-2) which is secreted by bacteria and is used to communicate both the cell density and the metabolic potential of the environment. The regulation of gene expression in response to changes in cell density is called quorum sensing. Catalyzes the transformation of S-ribosylhomocysteine (RHC) to homocysteine (HC) and 4,5-dihydroxy-2,3-pentadione (DPD). In Shewanella pealeana (strain ATCC 700345 / ANG-SQ1), this protein is S-ribosylhomocysteine lyase.